Consider the following 723-residue polypeptide: Epidermal growth factor receptor kinase substrate 8-like protein 1 (723 aa).

A PTB domain is found at 35 to 164 (QYPVNHLVTF…LHNYRSGRGE (130 aa)). Residues 162–183 (RGERRAAALRATQEELQRDRSP) are compositionally biased toward basic and acidic residues. Disordered stretches follow at residues 162-247 (RGER…PRGP), 442-477 (KQLQ…LESE), 537-589 (GPRL…GLDP), and 609-636 (LAQG…GSDA). S182 is modified (phosphoserine). At T187 the chain carries Phosphothreonine. Positions 478–537 (TAGKWVLCNYDFQARNSSELSVKQRDVLEVLDDSRKWWKVRDPAGQEGYVPYNILTPYPG) constitute an SH3 domain. A compositionally biased stretch (polar residues) spans 543–552 (SQSPARSLNS). Over residues 553-568 (TPPPPPAPAPAPPPAL) the composition is skewed to pro residues. Basic and acidic residues predominate over residues 571–580 (PRWDRPRWDS). Positions 689–719 (VQRSLLEDKEKVSELEAVMEKQKKKVEGEVE) form a coiled coil.

Belongs to the EPS8 family. Interacts with ABI1. Part of a complex that contains SOS1, ABI1 and EPS8L2. Associates with F-actin. Detected in placenta.

Its subcellular location is the cytoplasm. Functionally, stimulates guanine exchange activity of SOS1. May play a role in membrane ruffling and remodeling of the actin cytoskeleton. In Homo sapiens (Human), this protein is Epidermal growth factor receptor kinase substrate 8-like protein 1 (EPS8L1).